Here is a 204-residue protein sequence, read N- to C-terminus: Probable UbiX-like flavin prenyltransferase (204 aa).

FMN-binding positions include 21-23, Ser-47, 98-101, and Arg-133; these read GAT and SMKS.

Belongs to the UbiX/PAD1 family. YclB subfamily. As to quaternary structure, homododecamer.

It carries out the reaction dimethylallyl phosphate + FMNH2 = prenylated FMNH2 + phosphate. In terms of biological role, involved in the non-oxidative decarboxylation and detoxification of phenolic derivatives under both aerobic and anaerobic conditions. Flavin prenyltransferase that catalyzes the synthesis of the prenylated FMN cofactor (prenyl-FMN) for phenolic acid decarboxylase. The chain is Probable UbiX-like flavin prenyltransferase from Bacillus subtilis (strain 168).